A 1000-amino-acid polypeptide reads, in one-letter code: Sop-2-related protein 1 (1000 aa).

3 disordered regions span residues 355 to 374, 379 to 422, and 466 to 509; these read KIMKQEEEEEKARKHGQYQQ, HQQH…GPSE, and APSE…VARG. Low complexity predominate over residues 390-404; it reads SSSSVPSTSSPSCSS. Basic and acidic residues predominate over residues 406 to 415; sequence ANRKEMETVR. A compositionally biased stretch (low complexity) spans 489–502; sequence GPSQQQQIPGTSQQ. The tract at residues 633 to 720 is RNA-binding; the sequence is REQILPQQYM…LNTSSVQPSE (88 aa). The tract at residues 948–1000 is disordered; it reads HRMHSQRPPSMGNSSTSSEASSTSPTNAATATSSPASNRPTTSTAQPPTLNPT. Residues 960–992 are compositionally biased toward low complexity; it reads NSSTSSEASSTSPTNAATATSSPASNRPTTSTA.

In terms of assembly, binds through its N-terminal region to the N-terminal region of sop-2.

It localises to the nucleus. In terms of biological role, acts synergistically with sop-2 to maintain the transcriptionally repressive state of homeotic genes throughout development. Not required to initiate repression, but to maintain it during later stages of development. Also required to repress expression of other genes. Binds RNA in a sequence-independent manner. The chain is Sop-2-related protein 1 (sor-1) from Caenorhabditis elegans.